The sequence spans 168 residues: Transcriptional repressor NrdR (168 aa).

The segment at 3 to 34 (CPFCQDAENKVIDSRESHEGSVIRRRRECLTC) is a zinc-finger region. One can recognise an ATP-cone domain in the interval 49-139 (PLIVKKDGRR…VYRSFRDIAE (91 aa)).

It belongs to the NrdR family. The cofactor is Zn(2+).

Negatively regulates transcription of bacterial ribonucleotide reductase nrd genes and operons by binding to NrdR-boxes. The sequence is that of Transcriptional repressor NrdR from Myxococcus xanthus (strain DK1622).